The chain runs to 365 residues: MQNLPVTHYSALLAEKQEKLTALLAPFNAPNLQVFASPTQHFRMRAEFRIWHEGDDFYHIMFDQQSKQRYRVDNFPIASELINRMMTALLPLLKQQTVLHHRLFQIDYLSTQSQHIIVSLLYHKALDEDWQAAAQTLRSQLQQQGFNVQIVGRASKQKICLEQDYVDEILRVHGKDYIYRQVENSFTQPNATVNSKMLEWAVDCTRNSHGDLLELYCGNGNFSIALAQNFRKVLATEIAKPSVAAAQFNIAANQINNLQIIRMSAEEFTQAMQGVREFNRLKGIDLKAYECNTIFVDPPRAGLDADTVKLVQQYERILYISCNPHTLCDNLQTLSQTHRIEKAALFDQFPYTEHMEAGVWLVRKG.

The S-adenosyl-L-methionine site is built by Q188, Y216, N221, E237, and D297. C322 acts as the Nucleophile in catalysis. Catalysis depends on E356, which acts as the Proton acceptor.

The protein belongs to the class I-like SAM-binding methyltransferase superfamily. RNA M5U methyltransferase family. TrmA subfamily.

It carries out the reaction uridine(54) in tRNA + S-adenosyl-L-methionine = 5-methyluridine(54) in tRNA + S-adenosyl-L-homocysteine + H(+). The catalysed reaction is uridine(341) in tmRNA + S-adenosyl-L-methionine = 5-methyluridine(341) in tmRNA + S-adenosyl-L-homocysteine + H(+). In terms of biological role, dual-specificity methyltransferase that catalyzes the formation of 5-methyluridine at position 54 (m5U54) in all tRNAs, and that of position 341 (m5U341) in tmRNA (transfer-mRNA). The chain is tRNA/tmRNA (uracil-C(5))-methyltransferase from Aggregatibacter aphrophilus (strain NJ8700) (Haemophilus aphrophilus).